The primary structure comprises 238 residues: Uridylate kinase (238 aa).

Position 12–15 (12–15 (KLSG)) interacts with ATP. Residue G54 coordinates UMP. Residues G55 and R59 each coordinate ATP. UMP contacts are provided by residues D74 and 135-142 (TGNPFFTT). Residues T162, Y168, and D171 each coordinate ATP.

It belongs to the UMP kinase family. As to quaternary structure, homohexamer.

The protein localises to the cytoplasm. It carries out the reaction UMP + ATP = UDP + ADP. The protein operates within pyrimidine metabolism; CTP biosynthesis via de novo pathway; UDP from UMP (UMPK route): step 1/1. Its activity is regulated as follows. Inhibited by UTP. Functionally, catalyzes the reversible phosphorylation of UMP to UDP. The chain is Uridylate kinase from Janthinobacterium sp. (strain Marseille) (Minibacterium massiliensis).